The primary structure comprises 485 residues: GTPase Obg (485 aa).

One can recognise an Obg domain in the interval 2-159 (PRFVDRVVIH…RDLTLELKTV (158 aa)). Positions 160–341 (ADVGLIGFPS…LIFALWEMVK (182 aa)) constitute an OBG-type G domain. GTP-binding positions include 166 to 173 (GFPSAGKS), 191 to 195 (FTTLV), 212 to 215 (DVPG), 292 to 295 (NKID), and 322 to 324 (STV). The Mg(2+) site is built by Ser-173 and Thr-193. Residues 359 to 437 (PIPVDESGFT…IGDVTFDWEP (79 aa)) form the OCT domain. Positions 450–485 (RGTDIRLEQTDRVGAAERKAARRERRQPGESGGEDS) are disordered. Residues 452–468 (TDIRLEQTDRVGAAERK) show a composition bias toward basic and acidic residues.

Belongs to the TRAFAC class OBG-HflX-like GTPase superfamily. OBG GTPase family. In terms of assembly, monomer. It depends on Mg(2+) as a cofactor.

It is found in the cytoplasm. In terms of biological role, an essential GTPase which binds GTP, GDP and possibly (p)ppGpp with moderate affinity, with high nucleotide exchange rates and a fairly low GTP hydrolysis rate. Plays a role in control of the cell cycle, stress response, ribosome biogenesis and in those bacteria that undergo differentiation, in morphogenesis control. The polypeptide is GTPase Obg (Mycolicibacterium smegmatis (strain ATCC 700084 / mc(2)155) (Mycobacterium smegmatis)).